Here is a 379-residue protein sequence, read N- to C-terminus: Queuine tRNA-ribosyltransferase (379 aa).

Asp94 functions as the Proton acceptor in the catalytic mechanism. Substrate is bound by residues 94–98 (DSGGF), Asp148, Gln191, and Gly218. The interval 249 to 255 (GVGSPDS) is RNA binding. Catalysis depends on Asp268, which acts as the Nucleophile. The tract at residues 273 to 277 (TRIAR) is RNA binding; important for wobble base 34 recognition. Residues Cys306, Cys308, Cys311, and His337 each coordinate Zn(2+).

This sequence belongs to the queuine tRNA-ribosyltransferase family. In terms of assembly, homodimer. Within each dimer, one monomer is responsible for RNA recognition and catalysis, while the other monomer binds to the replacement base PreQ1. Requires Zn(2+) as cofactor.

It catalyses the reaction 7-aminomethyl-7-carbaguanine + guanosine(34) in tRNA = 7-aminomethyl-7-carbaguanosine(34) in tRNA + guanine. It functions in the pathway tRNA modification; tRNA-queuosine biosynthesis. In terms of biological role, catalyzes the base-exchange of a guanine (G) residue with the queuine precursor 7-aminomethyl-7-deazaguanine (PreQ1) at position 34 (anticodon wobble position) in tRNAs with GU(N) anticodons (tRNA-Asp, -Asn, -His and -Tyr). Catalysis occurs through a double-displacement mechanism. The nucleophile active site attacks the C1' of nucleotide 34 to detach the guanine base from the RNA, forming a covalent enzyme-RNA intermediate. The proton acceptor active site deprotonates the incoming PreQ1, allowing a nucleophilic attack on the C1' of the ribose to form the product. After dissociation, two additional enzymatic reactions on the tRNA convert PreQ1 to queuine (Q), resulting in the hypermodified nucleoside queuosine (7-(((4,5-cis-dihydroxy-2-cyclopenten-1-yl)amino)methyl)-7-deazaguanosine). This Listeria welshimeri serovar 6b (strain ATCC 35897 / DSM 20650 / CCUG 15529 / CIP 8149 / NCTC 11857 / SLCC 5334 / V8) protein is Queuine tRNA-ribosyltransferase.